A 321-amino-acid chain; its full sequence is Cytochrome c biogenesis protein CcsA (321 aa).

Transmembrane regions (helical) follow at residues 9–29 (ILTHISFSTISIVITIHLITL), 44–64 (GMIATFFSITGFLVSRWVSSG), 68–88 (LSNLYESLIFLSWTLYILHTI), 143–163 (MLLSYATLLCGSLLSAALLII), 225–245 (VISLGFTLLTVGILCGAVWAN), 259–273 (TWAFITWTIFAIYLH), and 288–308 (VASIGFLIIWICYFGINLLGI).

The protein belongs to the CcmF/CycK/Ccl1/NrfE/CcsA family. In terms of assembly, may interact with Ccs1.

The protein resides in the plastid. The protein localises to the chloroplast thylakoid membrane. In terms of biological role, required during biogenesis of c-type cytochromes (cytochrome c6 and cytochrome f) at the step of heme attachment. This Zea mays (Maize) protein is Cytochrome c biogenesis protein CcsA.